We begin with the raw amino-acid sequence, 65 residues long: Weak neurotoxin 7 (65 aa).

Intrachain disulfides connect cysteine 3/cysteine 24, cysteine 6/cysteine 11, cysteine 17/cysteine 42, cysteine 46/cysteine 57, and cysteine 58/cysteine 63.

The protein belongs to the three-finger toxin family. Ancestral subfamily. Orphan group II sub-subfamily. As to expression, expressed by the venom gland.

Its subcellular location is the secreted. Its function is as follows. Binds with low affinity to muscular (alpha-1-beta-1-delta-epsilon/CHRNA1-CHRNB1-CHRND-CHRNE) and very low affinity to neuronal (alpha-7/CHRNA7) nicotinic acetylcholine receptor (nAChR). In Naja naja (Indian cobra), this protein is Weak neurotoxin 7.